Here is a 723-residue protein sequence, read N- to C-terminus: MIYQADTLQVKEIQDGIAELSFCSPKSVNKLDLATLESLDKALDALTSHQGLKGLMLTSDKDAFIVGADITEFLGLFAKTDAELDQWLQFANSIFNKLEDLPVPTISVLKGHTLGGGCECVLATDMRIGDKTTSIGLPETKLGIMPGFGGCVRLPRVIGADSAMEIITQGKACRADEALKIGLLDAVVETDALYESALQTLTSAINEKIDWQARRKQKTSPLTLSKLESMMSFTMAKGLVAQVAGPHYPAPMTAVITIEEGARFARNEALDIERKYFVKLAKSEEAKALVGLFLNDQYIKGIAKKAAKSASKDTERAAVLGAGIMGGGIAYQSALKGVPVLMKDIAQPSLDLGMTEASKLLNKRLAQGRIDGFKMAGILASITPSLHYAGIENSDVIVEAVVENPKVKATVLSEVESHVGEDTVITSNTSTIPINLLAQSLKRPENFCGMHFFNPVHRMPLVEIIRGEKTSDETINRVVAYAAKMGKSPIVVNDCPGFFVNRVLFPYFGGFSMLLRDGADFTKVDKVMERKFGWPMGPAYLLDVVGIDTAHHAQAVMAEGFPERMGKQGRDAIDALFEANKYGQKNGNGFYSYTIDKKGKPKKTFTEDILPVLADVCADKQEFDEQTIIQRMMIPMINEVVLCLQEGIIATPQEADMALVYGLGFPPFRGGVFRYLDSVGIAEFVEMAKQHADLGAMYHVPQMLIDMAAKGESFYGAQQQGSI.

Residues 1–189 are enoyl-CoA hydratase/isomerase; sequence MIYQADTLQV…KIGLLDAVVE (189 aa). D296 lines the substrate pocket. The tract at residues 311–723 is 3-hydroxyacyl-CoA dehydrogenase; it reads SKDTERAAVL…FYGAQQQGSI (413 aa). NAD(+) is bound by residues M325, D344, 401 to 403, K408, and S430; that span reads VVE. Residue H451 is the For 3-hydroxyacyl-CoA dehydrogenase activity of the active site. N454 is a binding site for NAD(+). Residues N501 and Y661 each contribute to the substrate site.

It in the N-terminal section; belongs to the enoyl-CoA hydratase/isomerase family. This sequence in the C-terminal section; belongs to the 3-hydroxyacyl-CoA dehydrogenase family. As to quaternary structure, heterotetramer of two alpha chains (FadB) and two beta chains (FadA).

It carries out the reaction a (3S)-3-hydroxyacyl-CoA + NAD(+) = a 3-oxoacyl-CoA + NADH + H(+). The enzyme catalyses a (3S)-3-hydroxyacyl-CoA = a (2E)-enoyl-CoA + H2O. The catalysed reaction is a 4-saturated-(3S)-3-hydroxyacyl-CoA = a (3E)-enoyl-CoA + H2O. It catalyses the reaction (3S)-3-hydroxybutanoyl-CoA = (3R)-3-hydroxybutanoyl-CoA. It carries out the reaction a (3Z)-enoyl-CoA = a 4-saturated (2E)-enoyl-CoA. The enzyme catalyses a (3E)-enoyl-CoA = a 4-saturated (2E)-enoyl-CoA. It participates in lipid metabolism; fatty acid beta-oxidation. Functionally, involved in the aerobic and anaerobic degradation of long-chain fatty acids via beta-oxidation cycle. Catalyzes the formation of 3-oxoacyl-CoA from enoyl-CoA via L-3-hydroxyacyl-CoA. It can also use D-3-hydroxyacyl-CoA and cis-3-enoyl-CoA as substrate. This chain is Fatty acid oxidation complex subunit alpha, found in Vibrio parahaemolyticus serotype O3:K6 (strain RIMD 2210633).